The following is a 110-amino-acid chain: NADH-quinone oxidoreductase subunit K (110 aa).

A run of 3 helical transmembrane segments spans residues 14–34 (VSQY…GMMV), 39–59 (ITIL…FVGI), and 70–90 (IFAL…LGII).

This sequence belongs to the complex I subunit 4L family. NDH-1 is composed of 14 different subunits. Subunits NuoA, H, J, K, L, M, N constitute the membrane sector of the complex.

It localises to the cell inner membrane. It catalyses the reaction a quinone + NADH + 5 H(+)(in) = a quinol + NAD(+) + 4 H(+)(out). In terms of biological role, NDH-1 shuttles electrons from NADH, via FMN and iron-sulfur (Fe-S) centers, to quinones in the respiratory chain. The immediate electron acceptor for the enzyme in this species is believed to be ubiquinone. Couples the redox reaction to proton translocation (for every two electrons transferred, four hydrogen ions are translocated across the cytoplasmic membrane), and thus conserves the redox energy in a proton gradient. The protein is NADH-quinone oxidoreductase subunit K of Hydrogenobaculum sp. (strain Y04AAS1).